The sequence spans 406 residues: Bifunctional enzyme IspD/IspF (406 aa).

The 2-C-methyl-D-erythritol 4-phosphate cytidylyltransferase stretch occupies residues 1-246 (MLQMPSKQPI…KLSASLLPDV (246 aa)). The 2-C-methyl-D-erythritol 2,4-cyclodiphosphate synthase stretch occupies residues 247–406 (RTGNGYDVHQ…ATVVYRGVKR (160 aa)). A divalent metal cation is bound by residues D253 and H255. Residues 253-255 (DVH) and 279-280 (HS) each bind 4-CDP-2-C-methyl-D-erythritol 2-phosphate. Residue H287 coordinates a divalent metal cation. Residues 301 to 303 (DIG), 377 to 380 (TTNE), F384, and R387 contribute to the 4-CDP-2-C-methyl-D-erythritol 2-phosphate site.

This sequence in the N-terminal section; belongs to the IspD/TarI cytidylyltransferase family. IspD subfamily. The protein in the C-terminal section; belongs to the IspF family. A divalent metal cation is required as a cofactor.

It carries out the reaction 2-C-methyl-D-erythritol 4-phosphate + CTP + H(+) = 4-CDP-2-C-methyl-D-erythritol + diphosphate. The enzyme catalyses 4-CDP-2-C-methyl-D-erythritol 2-phosphate = 2-C-methyl-D-erythritol 2,4-cyclic diphosphate + CMP. It functions in the pathway isoprenoid biosynthesis; isopentenyl diphosphate biosynthesis via DXP pathway; isopentenyl diphosphate from 1-deoxy-D-xylulose 5-phosphate: step 2/6. Its pathway is isoprenoid biosynthesis; isopentenyl diphosphate biosynthesis via DXP pathway; isopentenyl diphosphate from 1-deoxy-D-xylulose 5-phosphate: step 4/6. Bifunctional enzyme that catalyzes the formation of 4-diphosphocytidyl-2-C-methyl-D-erythritol from CTP and 2-C-methyl-D-erythritol 4-phosphate (MEP) (IspD), and catalyzes the conversion of 4-diphosphocytidyl-2-C-methyl-D-erythritol 2-phosphate (CDP-ME2P) to 2-C-methyl-D-erythritol 2,4-cyclodiphosphate (ME-CPP) with a corresponding release of cytidine 5-monophosphate (CMP) (IspF). This Rhizobium leguminosarum bv. trifolii (strain WSM2304) protein is Bifunctional enzyme IspD/IspF.